A 132-amino-acid chain; its full sequence is C-glycoside deglycosidase beta subunit (132 aa).

The protein belongs to the C-glycoside deglycosidase beta subunit family. Heterodimer composed of an alpha subunit (CarB2) and a beta subunit (CarC2). Requires a divalent metal cation as cofactor.

It catalyses the reaction 3''-dehydroorientin = 1,5-anhydro-D-erythro-hex-1-en-3-ulose + luteolin. With respect to regulation, activity is strongly reduced in the presence of chelating agents. Functionally, carbon-carbon bond-cleaving enzyme which participates in the metabolism of C-glycosides. Acts on the C8-glycosylated compound 3''-dehydroorientin (3''-oxo-orientin). This is C-glycoside deglycosidase beta subunit from Arthrobacter globiformis (strain ATCC 8010 / DSM 20124 / JCM 1332 / NBRC 12137 / NCIMB 8907 / NRRL B-2979 / 168).